Here is a 499-residue protein sequence, read N- to C-terminus: MVLLYSQASWDKRSKADALVLPFWMKNVKAQEAAVVDEDYKLVYQNALQNFSGKKGEAVFLFGNDKTKEQKIVLLGLGKSEEVSGTAILDAYAHVTTVLRKAKCKTVNILLPTISQLRFSVEEFLTNLAAGVLSLNYNYPTYHKVDASLPLLEKVTVLGIVPKVGDKIFRKEESLFEGVYLTRDLVNTNADEVTPEKLAAVAKGLAGEFASLDVKILDRKAILKEKMGLLAAVAKGSAVEPRFIVLDYQGKPKSKDRTVLIGKGVTFDSGGLDLKPGKAMITMKEDMAGAATVLGIFSALASLELPINVTGIIPATENAIGSAAYKMGDVYVGMSGLSVEIGSTDAEGRLILADAITYALKYCAPTRIIDFATLTGAMVVSLGEAVAGFFANNDVLARDLAEAASETGEALWRMPLVEKYDRALHSDIADMKNIGSNRAGSITAALFLQRFLEDNPVAWAHLDIAGTAYHEKEELPYPKYATGFGVRCLIYYMNKFLSK.

K263 and D268 together coordinate Mn(2+). The active site involves K275. Mn(2+) contacts are provided by D286, D345, and E347. Residue R349 is part of the active site.

This sequence belongs to the peptidase M17 family. It depends on Mn(2+) as a cofactor.

Its subcellular location is the cytoplasm. The enzyme catalyses Release of an N-terminal amino acid, Xaa-|-Yaa-, in which Xaa is preferably Leu, but may be other amino acids including Pro although not Arg or Lys, and Yaa may be Pro. Amino acid amides and methyl esters are also readily hydrolyzed, but rates on arylamides are exceedingly low.. The catalysed reaction is Release of an N-terminal amino acid, preferentially leucine, but not glutamic or aspartic acids.. Functionally, presumably involved in the processing and regular turnover of intracellular proteins. Catalyzes the removal of unsubstituted N-terminal amino acids from various peptides. This chain is Probable cytosol aminopeptidase (pepA), found in Chlamydia muridarum (strain MoPn / Nigg).